Reading from the N-terminus, the 1075-residue chain is Ataxin-2-like protein (1075 aa).

Met1 carries the N-acetylmethionine modification. A compositionally biased stretch (low complexity) spans 1-12; the sequence is MLKPQPLQQPSQ. Positions 1–115 are disordered; that stretch reads MLKPQPLQQP…KGPPQSPVFE (115 aa). Positions 98-121 are interaction with MPL; sequence SARGQSTGKGPPQSPVFEGVYNNS. Phosphoserine is present on residues Ser103 and Ser111. Phosphotyrosine is present on Tyr118. Positions 122-199 constitute a Sm domain; it reads RMLHFLTAVV…VMLVHFRNVD (78 aa). At Lys207 the chain carries N6-acetyllysine. At Ser238 the chain carries Phosphoserine. The residue at position 264 (Tyr264) is a Phosphotyrosine. Ser306 is subject to Phosphoserine. Phosphotyrosine is present on Tyr309. Residues 316–328 show a composition bias toward basic and acidic residues; sequence ENDDGRTEEEKHS. 6 disordered regions span residues 316–521, 551–697, 733–770, 820–849, 865–940, and 1022–1045; these read ENDD…LEPQ, QFKL…SIPV, VSNS…MMQA, SNPR…EQPT, ATQL…SSFP, and PYIG…ADDR. The span at 330–342 shows a compositional bias: polar residues; it reads VQRQGSGRESPSL. Ser335 and Ser339 each carry phosphoserine. Residue Lys348 forms a Glycyl lysine isopeptide (Lys-Gly) (interchain with G-Cter in SUMO2) linkage. Tyr349 is modified (phosphotyrosine). Arg361 is subject to Asymmetric dimethylarginine. The span at 363–380 shows a compositional bias: low complexity; the sequence is GVRCSSSRGGRPGLSSLP. Ser391 and Ser409 each carry phosphoserine. The span at 421–433 shows a compositional bias: polar residues; the sequence is TLSSPSNRPSGET. Ser449 is subject to Phosphoserine. Low complexity-rich tracts occupy residues 450–462 and 471–485; these read PKSA…SASC and VPTS…SSVS. Ser493 and Ser496 each carry phosphoserine. A compositionally biased stretch (basic and acidic residues) spans 505 to 516; sequence DVKELSTKEPGR. A phosphoserine mark is found at Ser557, Ser558, Ser559, and Ser563. Residues 571-584 are compositionally biased toward basic and acidic residues; the sequence is ILKEEPKGKEKEVD. A Phosphoserine modification is found at Ser594. Thr632 bears the Phosphothreonine mark. Phosphoserine occurs at positions 634, 674, 680, and 684. Low complexity-rich tracts occupy residues 678-694 and 761-770; these read STST…STPS and PASAPPMMQA. Polar residues predominate over residues 874 to 898; it reads QPATTPTGSQPQSQHAAPSPVQHQA. 2 stretches are compositionally biased toward low complexity: residues 931-940 and 1025-1037; these read SAQSPQSSFP and GHPQ…QAPG.

The protein belongs to the ataxin-2 family. As to quaternary structure, interacts with MPL/TPOR and EPOR and dissociates after ligand stimulation. Interacts with DDX6, G3BP1, and ATXN2. Interacts with PRMT1. Interacts with CIC and ATXN1. Post-translationally, thrombopoietin triggers the phosphorylation on tyrosine residues in a way that is dependent on MPL C-terminal domain. Asymmetrically dimethylated. Probably methylated by PRMT1. Expressed at high levels in thymus, lymph node, spleen, fetal kidney and adult testis. Constitutively associated with MPL and EPOR in hematopoietic cells.

It is found in the membrane. It localises to the cytoplasm. Its subcellular location is the nucleus speckle. The protein localises to the cytoplasmic granule. Functionally, involved in the regulation of stress granule and P-body formation. The polypeptide is Ataxin-2-like protein (ATXN2L) (Homo sapiens (Human)).